The following is a 138-amino-acid chain: Histone H2B.3 (138 aa).

Basic and acidic residues-rich tracts occupy residues 1 to 18 (MAPKAEKKPVAEKAEKTT) and 26 to 38 (EKRPPASKEGGDK). The disordered stretch occupies residues 1-46 (MAPKAEKKPVAEKAEKTTAAKKTKAEKRPPASKEGGDKKGKKKSKK). An N6-acetyllysine mark is found at K7 and K27. K134 is covalently cross-linked (Glycyl lysine isopeptide (Lys-Gly) (interchain with G-Cter in ubiquitin)).

The protein belongs to the histone H2B family. As to quaternary structure, the nucleosome is a histone octamer containing two molecules each of H2A, H2B, H3 and H4 assembled in one H3-H4 heterotetramer and two H2A-H2B heterodimers. The octamer wraps approximately 147 bp of DNA. In terms of processing, can be acetylated to form H2BK6ac and H2BK33ac. Post-translationally, monoubiquitinated to form H2BK143ub1; may give a specific tag for epigenetic transcriptional activation.

The protein resides in the nucleus. It localises to the chromosome. In terms of biological role, core component of nucleosome. Nucleosomes wrap and compact DNA into chromatin, limiting DNA accessibility to the cellular machineries which require DNA as a template. Histones thereby play a central role in transcription regulation, DNA repair, DNA replication and chromosomal stability. DNA accessibility is regulated via a complex set of post-translational modifications of histones, also called histone code, and nucleosome remodeling. This is Histone H2B.3 from Triticum aestivum (Wheat).